The chain runs to 199 residues: GQGSLAYPGLRTQGNLETLSGPNDATRGLTSLADTFEHVIEELLDEQQVIQPSKENKDADLYSSRVMLSSQVPLEPPLLFLLEEYKNYLDAANMSMRVRRHSDPARRGELSVCDSTSEWVTAAEKKTAVDMSGATVTVLEKVPVPKGQLKQYFYETKCSSKGYAKEGCRGIDKRYWNSQCRTTQSYVRALTMDNKKRVG.

Positions 1 to 23 (GQGSLAYPGLRTQGNLETLSGPN) are disordered. The propeptide occupies 1–100 (GQGSLAYPGL…AANMSMRVRR (100 aa)). Residues 12 to 23 (TQGNLETLSGPN) are compositionally biased toward polar residues. An N-linked (GlcNAc...) asparagine glycan is attached at N93. C113 and C180 form a disulfide bridge.

The protein belongs to the NGF-beta family.

Its subcellular location is the secreted. Functionally, promotes the survival of neuronal populations that are all located either in the central nervous system or directly connected to it. The chain is Neurotrophic factor BDNF precursor form (BDNF) from Morelia spilota (Carpet python).